A 308-amino-acid chain; its full sequence is tRNA dimethylallyltransferase (308 aa).

16–23 provides a ligand contact to ATP; the sequence is GPTASGKT. 18-23 serves as a coordination point for substrate; the sequence is TASGKT. An interaction with substrate tRNA region spans residues 41–44; it reads DSQQ.

It belongs to the IPP transferase family. Monomer. Mg(2+) is required as a cofactor.

The catalysed reaction is adenosine(37) in tRNA + dimethylallyl diphosphate = N(6)-dimethylallyladenosine(37) in tRNA + diphosphate. Functionally, catalyzes the transfer of a dimethylallyl group onto the adenine at position 37 in tRNAs that read codons beginning with uridine, leading to the formation of N6-(dimethylallyl)adenosine (i(6)A). The chain is tRNA dimethylallyltransferase from Myxococcus xanthus (strain DK1622).